The sequence spans 172 residues: Adenylate kinase isoenzyme 6 (172 aa).

G13, G15, K16, T17, and T18 together coordinate ATP. Positions 33-56 are NMPbind; the sequence is NVGDLAREGHLYDGYDEEYGCPIL. Residues 108–118 are LID; sequence TRGYHEKKLQD. ATP is bound at residue R109.

It belongs to the adenylate kinase family. AK6 subfamily. Monomer and homodimer. Interacts with small ribosomal subunit protein uS11. Not a structural component of 43S pre-ribosomes, but transiently interacts with them by binding to uS11. Interacts with COIL (via C-terminus).

It localises to the cytoplasm. It is found in the nucleus. The protein resides in the nucleoplasm. The protein localises to the cajal body. It catalyses the reaction AMP + ATP = 2 ADP. It carries out the reaction ATP + H2O = ADP + phosphate + H(+). Broad-specificity nucleoside monophosphate (NMP) kinase that catalyzes the reversible transfer of the terminal phosphate group between nucleoside triphosphates and monophosphates. Also has ATPase activity. Involved in the late cytoplasmic maturation steps of the 40S ribosomal particles, specifically 18S rRNA maturation. While NMP activity is not required for ribosome maturation, ATPase activity is. Associates transiently with small ribosomal subunit protein uS11. ATP hydrolysis breaks the interaction with uS11. May temporarily remove uS11 from the ribosome to enable a conformational change of the ribosomal RNA that is needed for the final maturation step of the small ribosomal subunit. Its NMP activity may have a role in nuclear energy homeostasis. May be involved in regulation of Cajal body (CB) formation. The polypeptide is Adenylate kinase isoenzyme 6 (Rattus norvegicus (Rat)).